The chain runs to 60 residues: Mastoparan-B (60 aa).

Residues 1–27 form the signal peptide; it reads MKNTILILFTAFIALLGFFGMSAEALA. AXPX repeat units follow at residues 27–30, 31–34, 35–38, and 41–44; these read ADPL, AEPL, ADPN, and ADPE. The propeptide occupies 28-45; that stretch reads DPLAEPLADPNAEADPEA. Leucine 59 carries the leucine amide modification.

The protein belongs to the MCD family. Mastoparan subfamily. As to expression, expressed by the venom gland.

It localises to the secreted. Its subcellular location is the target cell membrane. Functionally, antimicrobial and mast cell degranulating peptide. Has broad spectrum antibacterial activity against both Gram-positive (S.aureus MIC=96-128 ug/ml, S.xylosus MIC=2 ug/ml, S.alactolyticus MIC=32 ug/ml, and S.choleraesuis MIC=32 ug/ml) and Gram-negative bacteria (C.koseri MIC=6 ug/ml, E.coli MIC=3-16 ug/ml, K.pneumoniae MIC=128 ug/ml, P.aerugiosa MIC=128 ug/ml, S.typhimurium MIC=64 ug/ml, V.parahamelytics MIC=32 ug/ml, and S.enterica), as well as on fungi (C.albicans, C.glabrata, and C.neoformans). Does not show antimicrobial activity against S.mutans. Affects membrane permeability of E.coli. Also acts as a mast cell degranulating peptide, that causes liberation of histamine from rat peritoneal mast cells. Its mast cell degranulation activity may be related to the activation of G-protein coupled receptors in mast cells as well as interaction with other proteins located in cell endosomal membranes in the mast cells. Whether this peptide shows hemolytic activities is controversial, as Lin et al., 2011 and Ho et al., 1991 found a hemolytic activity on sheep, chicken and human erythrocytes, whereas Kim et al., 2016 found no hemolytic activity on human erythrocytes. In vivo, induces edema in the rat paw. The polypeptide is Mastoparan-B (Vespa basalis (Hornet)).